A 385-amino-acid polypeptide reads, in one-letter code: GTPase Obg (385 aa).

The Obg domain occupies 1–159 (MHFIDQAEIE…RRLRLELKLI (159 aa)). One can recognise an OBG-type G domain in the interval 160 to 328 (AEVGIVGMPN…LLQRVWQCLG (169 aa)). Residues 166 to 173 (GMPNAGKS), 191 to 195 (FTTLQ), 213 to 216 (DIPG), 280 to 283 (NKID), and 309 to 311 (SAV) contribute to the GTP site. Positions 173 and 193 each coordinate Mg(2+).

The protein belongs to the TRAFAC class OBG-HflX-like GTPase superfamily. OBG GTPase family. As to quaternary structure, monomer. Mg(2+) serves as cofactor.

It is found in the cytoplasm. An essential GTPase which binds GTP, GDP and possibly (p)ppGpp with moderate affinity, with high nucleotide exchange rates and a fairly low GTP hydrolysis rate. Plays a role in control of the cell cycle, stress response, ribosome biogenesis and in those bacteria that undergo differentiation, in morphogenesis control. The sequence is that of GTPase Obg from Synechococcus sp. (strain JA-3-3Ab) (Cyanobacteria bacterium Yellowstone A-Prime).